The sequence spans 853 residues: MIGSPDVVAFTKEDDFGDSFSDPLSLPDEFSVPLFTHAANANPWTKTSYAKFSKDFILISEFSEQVGPQPLLTIPSDPKVCGTFDLNYFSLRIMSVDYQASFVGHPPGSNYPKLNFVEDSKVVLGDSKEGAFAYVHHLTLYDLEARGFVRPFCMAYISADERKIMQQFQELSSEFSKASECLKSGNRKAFANELEKKLKDLEYTRSVLHKETELQKMNNGCYSTQAIEKANELANVEKSIYEHKDLLRQITSYPSRRKRDVDFVQCEAEKPPVMDETLKDTNPSDSAENTVETESRKSSYTPQLIKAKSAKCFDKRLKTLEELCDTSFFLQTLEQLNAVEKSFRGDLCFIYTSQIDRALVSKQRVTSFLFEAEHDWEDGGASKNFSIPSNNPTIPILNFSGEPLSLDSYTTCIDVDHLKPGVESGEGPPESSTSDITQETSEAADTETKGSFSSDKSIEALGSVSPSSLQTNFFDGLERRSKISIPSYSDNASSSIAVPHRRSDGNLVQMDAACCIGQDGFIFEDPLPELAQECCGDTVVNQEPLSLLHGDPALQMDYILEESPNMGLTFSELNTSVLSEEVAKINIEDVFDRTSFMSISTSSDRAVSPFTYGSALTVKQKKKAGHSALRFIRQYPFAQQAISCLLSGRTLVILGVDEGTVRKLVNALFIFVPNLGKYGETVQPWLSTPFQLTDLQRWKLIGLQRAVSPAGSSILHSLNRYSRYISILDCDNKTLRCPPYKGTLISHLADHRTQIKRGSTYFLHIQGMLTQLTAKAFLYTFCHHIHLPMDINDQGSVTSRRTNFLLQLGYTVEESKIIQYLSELIKQHYIHGSAKVGNPSFSFNYTTSYLYKI.

Residues 47–219 (TSYAKFSKDF…KETELQKMNN (173 aa)) form the uDENN FLCN/SMCR8-type domain. Disordered stretches follow at residues 272–298 (PVMD…SRKS) and 418–454 (LKPG…SFSS). A compositionally biased stretch (polar residues) spans 280–298 (DTNPSDSAENTVETESRKS). The 438-residue stretch at 316 to 753 (RLKTLEELCD…LISHLADHRT (438 aa)) folds into the cDENN FLCN/SMCR8-type domain. A compositionally biased stretch (low complexity) spans 421–432 (GVESGEGPPESS). Residues 433–454 (TSDITQETSEAADTETKGSFSS) show a composition bias toward polar residues. In terms of domain architecture, dDENN FLCN/SMCR8-type spans 762-826 (FLHIQGMLTQ…IIQYLSELIK (65 aa)).

The protein belongs to the SMCR8 family. In terms of assembly, component of the C9orf72-SMCR8 complex. The C9orf72-SMCR8 complex associates with the ATG1/ULK1 kinase complex.

It is found in the cytoplasm. Its subcellular location is the nucleus. Functionally, component of the C9orf72-SMCR8 complex, a complex that has guanine nucleotide exchange factor (GEF) activity and regulates autophagy. In the complex, C9orf72 and SMCR8 probably constitute the catalytic subunits that promote the exchange of GDP to GTP, converting inactive GDP-bound RAB8A and RAB39B into their active GTP-bound form, thereby promoting autophagosome maturation. The C9orf72-SMCR8 complex also acts as a negative regulator of autophagy initiation by interacting with the ATG1/ULK1 kinase complex and inhibiting its protein kinase activity. This Danio rerio (Zebrafish) protein is Guanine nucleotide exchange protein smcr8a (smcr8a).